Here is a 157-residue protein sequence, read N- to C-terminus: ATP synthase subunit b' (157 aa).

The chain crosses the membrane as a helical span at residues 22 to 42 (ATLPIIAVQFLLLVAVLNSLF).

Belongs to the ATPase B chain family. As to quaternary structure, F-type ATPases have 2 components, F(1) - the catalytic core - and F(0) - the membrane proton channel. F(1) has five subunits: alpha(3), beta(3), gamma(1), delta(1), epsilon(1). F(0) has four main subunits: a(1), b(1), b'(1) and c(10-14). The alpha and beta chains form an alternating ring which encloses part of the gamma chain. F(1) is attached to F(0) by a central stalk formed by the gamma and epsilon chains, while a peripheral stalk is formed by the delta, b and b' chains.

The protein resides in the cellular thylakoid membrane. Functionally, f(1)F(0) ATP synthase produces ATP from ADP in the presence of a proton or sodium gradient. F-type ATPases consist of two structural domains, F(1) containing the extramembraneous catalytic core and F(0) containing the membrane proton channel, linked together by a central stalk and a peripheral stalk. During catalysis, ATP synthesis in the catalytic domain of F(1) is coupled via a rotary mechanism of the central stalk subunits to proton translocation. In terms of biological role, component of the F(0) channel, it forms part of the peripheral stalk, linking F(1) to F(0). The b'-subunit is a diverged and duplicated form of b found in plants and photosynthetic bacteria. The sequence is that of ATP synthase subunit b' from Synechococcus sp. (strain JA-3-3Ab) (Cyanobacteria bacterium Yellowstone A-Prime).